We begin with the raw amino-acid sequence, 157 residues long: SsrA-binding protein (157 aa).

Belongs to the SmpB family.

The protein localises to the cytoplasm. In terms of biological role, required for rescue of stalled ribosomes mediated by trans-translation. Binds to transfer-messenger RNA (tmRNA), required for stable association of tmRNA with ribosomes. tmRNA and SmpB together mimic tRNA shape, replacing the anticodon stem-loop with SmpB. tmRNA is encoded by the ssrA gene; the 2 termini fold to resemble tRNA(Ala) and it encodes a 'tag peptide', a short internal open reading frame. During trans-translation Ala-aminoacylated tmRNA acts like a tRNA, entering the A-site of stalled ribosomes, displacing the stalled mRNA. The ribosome then switches to translate the ORF on the tmRNA; the nascent peptide is terminated with the 'tag peptide' encoded by the tmRNA and targeted for degradation. The ribosome is freed to recommence translation, which seems to be the essential function of trans-translation. In Limosilactobacillus fermentum (strain NBRC 3956 / LMG 18251) (Lactobacillus fermentum), this protein is SsrA-binding protein.